Here is a 507-residue protein sequence, read N- to C-terminus: Alkyl hydroperoxide reductase subunit F (507 aa).

207–222 serves as a coordination point for FAD; that stretch reads DVLIVGGGPASGSAAI. Residues Cys-335 and Cys-338 are joined by a disulfide bond. 347-361 provides a ligand contact to NAD(+); sequence DVAVIGGGNSGVEAA. An FAD-binding site is contributed by 467–477; it reads TNVPGIFAAGD.

This sequence belongs to the class-II pyridine nucleotide-disulfide oxidoreductase family. As to quaternary structure, homodimer. FAD is required as a cofactor.

Functionally, serves to protect the cell against DNA damage by alkyl hydroperoxides. It can use either NADH or NADPH as electron donor for direct reduction of redox dyes or of alkyl hydroperoxides when combined with the AhpC protein. This chain is Alkyl hydroperoxide reductase subunit F (ahpF), found in Staphylococcus epidermidis (strain ATCC 12228 / FDA PCI 1200).